Reading from the N-terminus, the 692-residue chain is Elongation factor G (692 aa).

The 276-residue stretch at 8–283 folds into the tr-type G domain; sequence DKYRNIGIMA…AVVDYMPSPL (276 aa). GTP-binding positions include 17 to 24, 81 to 85, and 135 to 138; these read AHIDAGKT, DTPGH, and NKMD.

It belongs to the TRAFAC class translation factor GTPase superfamily. Classic translation factor GTPase family. EF-G/EF-2 subfamily.

Its subcellular location is the cytoplasm. Its function is as follows. Catalyzes the GTP-dependent ribosomal translocation step during translation elongation. During this step, the ribosome changes from the pre-translocational (PRE) to the post-translocational (POST) state as the newly formed A-site-bound peptidyl-tRNA and P-site-bound deacylated tRNA move to the P and E sites, respectively. Catalyzes the coordinated movement of the two tRNA molecules, the mRNA and conformational changes in the ribosome. The protein is Elongation factor G of Trichlorobacter lovleyi (strain ATCC BAA-1151 / DSM 17278 / SZ) (Geobacter lovleyi).